A 295-amino-acid chain; its full sequence is Ribosomal RNA small subunit methyltransferase A (295 aa).

Residues Asn-31, Leu-33, Gly-58, Glu-79, Asp-104, and Asn-129 each coordinate S-adenosyl-L-methionine.

The protein belongs to the class I-like SAM-binding methyltransferase superfamily. rRNA adenine N(6)-methyltransferase family. RsmA subfamily.

The protein localises to the cytoplasm. The catalysed reaction is adenosine(1518)/adenosine(1519) in 16S rRNA + 4 S-adenosyl-L-methionine = N(6)-dimethyladenosine(1518)/N(6)-dimethyladenosine(1519) in 16S rRNA + 4 S-adenosyl-L-homocysteine + 4 H(+). Specifically dimethylates two adjacent adenosines (A1518 and A1519) in the loop of a conserved hairpin near the 3'-end of 16S rRNA in the 30S particle. May play a critical role in biogenesis of 30S subunits. This is Ribosomal RNA small subunit methyltransferase A from Enterococcus faecalis (strain ATCC 700802 / V583).